The sequence spans 332 residues: MAEGGGGVGVVYVLENEAYLSKEGGTLKVSRRAGREVLLQKPLIAVEEIVILGNAVVTPALLKHCAQEGVGIHYLSPTGTYYAGLTRTPSKNAPARVAQFKAYLEPTWKLALAQRFVLGKIRNGLVFLRRNGAEGWERLKEALLEAERAQDEEALRGAEGRAADLYFRAFAELLPEEFAFGERSRRPPRDPANSLLSLAYTLLAKECESALLVAGLDPYVGYLHEVRYGRPSLALDLMEEFRSVLADSVVLSLLNNRRVTLEDFDDSEGFPRLRKEAWPKFLRAWEGRLNERIQHPLLGKRLAYREILLAQARILVKHLLGELPRYEPFAVR.

Mn(2+) contacts are provided by Glu159, His224, and Glu239.

It belongs to the CRISPR-associated endonuclease Cas1 family. Homodimer, forms a heterotetramer with a Cas2 homodimer. Mg(2+) is required as a cofactor. Mn(2+) serves as cofactor.

CRISPR (clustered regularly interspaced short palindromic repeat), is an adaptive immune system that provides protection against mobile genetic elements (viruses, transposable elements and conjugative plasmids). CRISPR clusters contain spacers, sequences complementary to antecedent mobile elements, and target invading nucleic acids. CRISPR clusters are transcribed and processed into CRISPR RNA (crRNA). Acts as a dsDNA endonuclease. Involved in the integration of spacer DNA into the CRISPR cassette. The polypeptide is CRISPR-associated endonuclease Cas1 3 (Thermus thermophilus (strain ATCC 27634 / DSM 579 / HB8)).